The sequence spans 123 residues: Methicillin resistance regulatory protein MecI (123 aa).

The H-T-H motif DNA-binding region spans 7 to 71; it reads EISSAEWEVM…KDNKIFQYYS (65 aa). An important for dimerization region spans residues 74–123; that stretch reads EESDIKYKTSKNFINKVYKGGFNSLVLNFVEKEDLSQDEIEELRNILNKK.

Belongs to the BlaI transcriptional regulatory family. In terms of assembly, monomer and homodimer. Upon exposure to beta-lactams, proteolytic cleavage at a single site impairs dimerization and abolishes repressor activity.

Its subcellular location is the cytoplasm. Its function is as follows. Transcriptional repressor that constitutively blocks the transcription of the gene for the penicillin-binding protein MecA. Binds palindromic DNA with the sequence 5'-TACA-[AT]-N-TGTA-3'. Regulates genes involved in antibiotic resistance. Binds DNA as a dimer. The polypeptide is Methicillin resistance regulatory protein MecI (mecI) (Staphylococcus aureus (strain N315)).